Here is a 204-residue protein sequence, read N- to C-terminus: Thymidylate kinase (204 aa).

11–18 (GLDKSGKT) provides a ligand contact to ATP.

This sequence belongs to the thymidylate kinase family.

The catalysed reaction is dTMP + ATP = dTDP + ADP. Its pathway is pyrimidine metabolism; dTTP biosynthesis. In Camelus, this protein is Thymidylate kinase (TMK).